Reading from the N-terminus, the 6919-residue chain is Nonribosomal peptide synthetase easA (6919 aa).

One can recognise a Carrier 1 domain in the interval 17-93 (TNNEVVEKDI…ELCQSVKLAE (77 aa)). Residue Ser54 is modified to O-(pantetheine 4'-phosphoryl)serine. An epimerization 1 region spans residues 123 to 427 (EAQKLYASTK…FLRKVKDTRM (305 aa)). Positions 294 to 319 (FRRSTPVESTNDERNTNERQHNRHQN) are disordered. A compositionally biased stretch (basic and acidic residues) spans 304 to 319 (NDERNTNERQHNRHQN). The segment at 604–981 (LNVELDCGRL…ISTTQEINQL (378 aa)) is condensation 1. The interval 1003 to 1394 (QRLRRPDAWA…GRRDTQIKVR (392 aa)) is adenylation 1. In terms of domain architecture, Carrier 2 spans 1531 to 1608 (EPETLLERQV…QLAQTAEVKD (78 aa)). Ser1569 bears the O-(pantetheine 4'-phosphoryl)serine mark. The tract at residues 1617–2031 (LLSPMQKWYF…ANAISALGTE (415 aa)) is epimerization 2. The tract at residues 2072–2509 (VEDIYPCSPI…VGQLNTVTPK (438 aa)) is condensation 2. An adenylation 2 region spans residues 2541–2930 (RPNATAVCAW…ARKDSQVKVR (390 aa)). Residues 3067 to 3143 (APSTFMEKKL…EMAAHLEAQM (77 aa)) form the Carrier 3 domain. Ser3104 is modified (O-(pantetheine 4'-phosphoryl)serine). Positions 3188-3599 (EDVYPCTPLQ…LLSKDEARRL (412 aa)) are condensation 3. Positions 3620 to 4018 (QHVSTNPYAP…GRRDGQVKIR (399 aa)) are adenylation 3. In terms of domain architecture, Carrier 4 spans 4151–4228 (TPSTSEEKNI…QLAKKAVIKT (78 aa)). Residue Ser4188 is modified to O-(pantetheine 4'-phosphoryl)serine. Residues 4282–4708 (ESIYYCSPIQ…EIDVIPTGDV (427 aa)) are condensation 4. The adenylation 4 stretch occupies residues 4732-5133 (EQALSQPGAQ…GRADGQIKIR (402 aa)). Positions 5260 to 5337 (ALSTETERRL…DMANTIANSE (78 aa)) constitute a Carrier 5 domain. Ser5296 carries the O-(pantetheine 4'-phosphoryl)serine modification. Positions 5380–5775 (EDAYPCTPLQ…VFGQLQSAAN (396 aa)) are condensation 5. Residues 5824–6216 (SCPDAQAVHA…IGRRDTQVKI (393 aa)) are adenylation 5. The region spanning 6344–6421 (EPATVTERLL…DMATLIDRKT (78 aa)) is the Carrier 6 domain. Ser6381 carries the O-(pantetheine 4'-phosphoryl)serine modification.

Its pathway is antibiotic biosynthesis. Nonribosomal peptide synthetase; part of the gene cluster that mediates the biosynthesis of emericellamides, secondary metabolites acting as antibiotics. The biosynthesis of emericellamides initiates from the highly reducing polyketide synthase easB which catalyzes the formation of the linear polyketide chain. EasB produces several polyketides that can be further processed by the downstream enzymes. The polyketides are released from easB as linear polyketide carboxylic acids, which are converted to CoA thioesters by the acyl-CoA ligase easD. The substrates are then loaded onto the acyltransferase easC, which shuttles them to the first thiolation (T) domain of the nonribosomal peptide synthetase easA. EasA then performs condensation of the polyketides with one glycine, two alanine, one valine and one leucine residues. A last step of cyclization leads to the production of emericellamides. The chain is Nonribosomal peptide synthetase easA from Emericella nidulans (strain FGSC A4 / ATCC 38163 / CBS 112.46 / NRRL 194 / M139) (Aspergillus nidulans).